Reading from the N-terminus, the 458-residue chain is MPN domain-containing protein (458 aa).

A disordered region spans residues 1-37 (MGSEPPSSPQVVEEGADEEDEELSGAEDADLRSSSGR). A compositionally biased stretch (acidic residues) spans 14–28 (EGADEEDEELSGAED). In terms of domain architecture, RAMA spans 42–137 (TRRGITLRVL…QYKTTWLHKY (96 aa)). DNA is bound by residues Ser-94, Ser-96, and Trp-116. The disordered stretch occupies residues 147 to 175 (SEGEDDEMGDDDEEEGKTTIPVEDKNKKS). The segment covering 148 to 161 (EGEDDEMGDDDEEE) has biased composition (acidic residues). The 136-residue stretch at 229-364 (VAVSSNVLLL…VASTITPFWV (136 aa)) folds into the MPN domain. 3 residues coordinate Zn(2+): His-306, His-308, and Asp-319. The short motif at 306–319 (HSHPRGPALPSLQD) is the JAMM motif element.

It belongs to the peptidase M67 family. Post-translationally, degraded following binding to N(6)-methyladenosine methylated DNA (m6A).

In terms of biological role, probable protease. Acts as a sensor of N(6)-methyladenosine methylation on DNA (m6A): recognizes and binds m6A DNA, leading to its degradation. Binds only double strand DNA (dsDNA) in a sequence-independent manner. In Danio rerio (Zebrafish), this protein is MPN domain-containing protein.